A 200-amino-acid polypeptide reads, in one-letter code: Small ribosomal subunit protein uS4 (200 aa).

The disordered stretch occupies residues 22–42 (TGKELQKRPYPPGQHGPGQRR). Positions 92 to 152 (SRLDNLVYRL…EKSRNLQVIK (61 aa)) constitute an S4 RNA-binding domain.

This sequence belongs to the universal ribosomal protein uS4 family. As to quaternary structure, part of the 30S ribosomal subunit. Contacts protein S5. The interaction surface between S4 and S5 is involved in control of translational fidelity.

One of the primary rRNA binding proteins, it binds directly to 16S rRNA where it nucleates assembly of the body of the 30S subunit. In terms of biological role, with S5 and S12 plays an important role in translational accuracy. The protein is Small ribosomal subunit protein uS4 of Geobacillus kaustophilus (strain HTA426).